The chain runs to 135 residues: uncharacterized protein (135 aa).

This is an uncharacterized protein from Fowl adenovirus A serotype 1 (strain CELO / Phelps) (FAdV-1).